Consider the following 282-residue polypeptide: MTQLITTIEEMRSIIANLHNQRRSVGFIPTMGALHDGHLKMMSLSLNENDVTIISIFVNPLQFGPNEDLDSYPRDIVGDTAKAESVGVDYIFHPTVKEMYPELPTIELKAGRLASVLEGAERPGHFDGVVTVVNKLFNIVRPHKAYFGKKDAQQLAIVEKMVEDFNHPIEIKGVDIVREDDGLAKSSRNIYLTKNERIEAVHLYKSLCLAQSLYKNGERNSEKIIKATRDYLTEHTSGTIETVAIYSYPELVEQTQIKDSIFISLAVKFSKARLIDNIIIEG.

31–38 (MGALHDGH) contributes to the ATP binding site. Catalysis depends on histidine 38, which acts as the Proton donor. Glutamine 62 contributes to the (R)-pantoate binding site. Beta-alanine is bound at residue glutamine 62. 148-151 (GKKD) is a binding site for ATP. (R)-pantoate is bound at residue glutamine 154. ATP is bound by residues valine 177 and 185–188 (KSSR).

It belongs to the pantothenate synthetase family. Homodimer.

The protein localises to the cytoplasm. It catalyses the reaction (R)-pantoate + beta-alanine + ATP = (R)-pantothenate + AMP + diphosphate + H(+). It functions in the pathway cofactor biosynthesis; (R)-pantothenate biosynthesis; (R)-pantothenate from (R)-pantoate and beta-alanine: step 1/1. Functionally, catalyzes the condensation of pantoate with beta-alanine in an ATP-dependent reaction via a pantoyl-adenylate intermediate. This is Pantothenate synthetase from Staphylococcus saprophyticus subsp. saprophyticus (strain ATCC 15305 / DSM 20229 / NCIMB 8711 / NCTC 7292 / S-41).